The sequence spans 419 residues: MSTQTPQPIRGTQDIFGPDAEAFAFVVETFERVRKLYRFRRVEMPVFEKTAVFSRSLGETTDVVSKEMYSFEDRGGESLTLRPEFTAGIARAYLTDGWQQYAPLKVATHGPLFRYERPQKGRYRQFHQIDAEIIGAGEPQADVELLVMADQLLKELGIGANDPGAVTLQLNTLGDGASREAWRAALVEYFRAHKAELSEDSQDRLERNPLRILDSKDPRDKPFTADAPRIDDFLSAEAQDFFGKVTSGLDAAGVEWTRAPALVRGLDYYRHTAFEFVTDRLGAQGTVLGGGRYDGLMEALGGAATPAVGWAAGIERLAMLVGEKGEARTDVIVVVEDDALLTSGIEQVSRLRREGVSAELVASGSARKRFDKAVKMGAKAILALAMRDGQPAARFRVEDDAATALRGQLEAAVAKYGAQ.

Belongs to the class-II aminoacyl-tRNA synthetase family. As to quaternary structure, homodimer.

The protein resides in the cytoplasm. The enzyme catalyses tRNA(His) + L-histidine + ATP = L-histidyl-tRNA(His) + AMP + diphosphate + H(+). The chain is Histidine--tRNA ligase from Novosphingobium aromaticivorans (strain ATCC 700278 / DSM 12444 / CCUG 56034 / CIP 105152 / NBRC 16084 / F199).